Consider the following 146-residue polypeptide: Hemoglobin subunit beta (146 aa).

V1 carries the post-translational modification N-acetylvaline. The region spanning 2–146 (HLTAEEKSAV…VANALAHKYH (145 aa)) is the Globin domain. S44 is modified (phosphoserine). The residue at position 59 (K59) is an N6-acetyllysine. H63 lines the heme b pocket. K82 is modified (N6-acetyllysine). H92 lines the heme b pocket. The residue at position 93 (C93) is an S-nitrosocysteine. The residue at position 144 (K144) is an N6-acetyllysine.

It belongs to the globin family. In terms of assembly, heterotetramer of two alpha chains and two beta chains. As to expression, red blood cells.

Its function is as follows. Involved in oxygen transport from the lung to the various peripheral tissues. This is Hemoglobin subunit beta from Tamias merriami (Merriam's chipmunk).